We begin with the raw amino-acid sequence, 1228 residues long: DNA-directed RNA polymerase subunit beta'' (1228 aa).

Zn(2+) contacts are provided by cysteine 222, cysteine 296, cysteine 303, and cysteine 306.

Belongs to the RNA polymerase beta' chain family. RpoC2 subfamily. As to quaternary structure, in plastids the minimal PEP RNA polymerase catalytic core is composed of four subunits: alpha, beta, beta', and beta''. When a (nuclear-encoded) sigma factor is associated with the core the holoenzyme is formed, which can initiate transcription. Requires Zn(2+) as cofactor.

The protein localises to the plastid. It localises to the chloroplast. The catalysed reaction is RNA(n) + a ribonucleoside 5'-triphosphate = RNA(n+1) + diphosphate. DNA-dependent RNA polymerase catalyzes the transcription of DNA into RNA using the four ribonucleoside triphosphates as substrates. The polypeptide is DNA-directed RNA polymerase subunit beta'' (Gracilaria tenuistipitata var. liui (Red alga)).